Reading from the N-terminus, the 313-residue chain is LUC7-related splicing factor homolog (313 aa).

The disordered stretch occupies residues 237–313; that stretch reads RKEREEKLGS…RDRRDRDRRY (77 aa).

It belongs to the Luc7 family.

In Caenorhabditis elegans, this protein is LUC7-related splicing factor homolog.